Reading from the N-terminus, the 239-residue chain is Lactate utilization protein A (239 aa).

The protein belongs to the LutA/YkgE family.

Its function is as follows. Is involved in L-lactate degradation and allows cells to grow with lactate as the sole carbon source. The chain is Lactate utilization protein A from Bacillus cereus (strain G9842).